The primary structure comprises 500 residues: NAD(P)H-quinone oxidoreductase chain 4, chloroplastic (500 aa).

Transmembrane regions (helical) follow at residues F4–L24, Y35–F55, F87–V107, L134–M154, F167–L187, A208–I228, H242–V262, A272–A292, I305–D325, G330–G350, M364–A384, L386–T406, I416–M436, and L462–L482.

It belongs to the complex I subunit 4 family.

The protein localises to the plastid. It is found in the chloroplast thylakoid membrane. The catalysed reaction is a plastoquinone + NADH + (n+1) H(+)(in) = a plastoquinol + NAD(+) + n H(+)(out). It catalyses the reaction a plastoquinone + NADPH + (n+1) H(+)(in) = a plastoquinol + NADP(+) + n H(+)(out). The chain is NAD(P)H-quinone oxidoreductase chain 4, chloroplastic from Pelargonium hortorum (Common geranium).